We begin with the raw amino-acid sequence, 144 residues long: 3-dehydroquinate dehydratase (144 aa).

Catalysis depends on tyrosine 23, which acts as the Proton acceptor. Residues asparagine 74, histidine 80, and aspartate 87 each contribute to the substrate site. The active-site Proton donor is the histidine 100. Substrate-binding positions include 101–102 and arginine 111; that span reads LS.

The protein belongs to the type-II 3-dehydroquinase family. As to quaternary structure, homododecamer.

It carries out the reaction 3-dehydroquinate = 3-dehydroshikimate + H2O. Its pathway is metabolic intermediate biosynthesis; chorismate biosynthesis; chorismate from D-erythrose 4-phosphate and phosphoenolpyruvate: step 3/7. Catalyzes a trans-dehydration via an enolate intermediate. In Haemophilus ducreyi (strain 35000HP / ATCC 700724), this protein is 3-dehydroquinate dehydratase.